A 406-amino-acid chain; its full sequence is Argininosuccinate synthase (406 aa).

8 to 16 is a binding site for ATP; sequence AYSGGLDTS. Tyrosine 86 contacts L-citrulline. Glycine 116 is an ATP binding site. 3 residues coordinate L-aspartate: threonine 118, asparagine 122, and aspartate 123. Asparagine 122 provides a ligand contact to L-citrulline. L-citrulline is bound by residues arginine 126, serine 174, serine 183, glutamate 259, and tyrosine 271.

The protein belongs to the argininosuccinate synthase family. Type 1 subfamily. Homotetramer.

It is found in the cytoplasm. The enzyme catalyses L-citrulline + L-aspartate + ATP = 2-(N(omega)-L-arginino)succinate + AMP + diphosphate + H(+). It functions in the pathway amino-acid biosynthesis; L-arginine biosynthesis; L-arginine from L-ornithine and carbamoyl phosphate: step 2/3. This Dehalococcoides mccartyi (strain ATCC BAA-2100 / JCM 16839 / KCTC 5957 / BAV1) protein is Argininosuccinate synthase.